Reading from the N-terminus, the 475-residue chain is Ribulose bisphosphate carboxylase large chain (475 aa).

The propeptide occupies 1 to 2 (MS). N-acetylproline is present on proline 3. An N6,N6,N6-trimethyllysine modification is found at lysine 14. Substrate-binding residues include asparagine 123 and threonine 173. Lysine 175 functions as the Proton acceptor in the catalytic mechanism. Lysine 177 provides a ligand contact to substrate. 3 residues coordinate Mg(2+): lysine 201, aspartate 203, and glutamate 204. N6-carboxylysine is present on lysine 201. Residue histidine 294 is the Proton acceptor of the active site. Substrate is bound by residues arginine 295, histidine 327, and serine 379.

Belongs to the RuBisCO large chain family. Type I subfamily. Heterohexadecamer of 8 large chains and 8 small chains; disulfide-linked. The disulfide link is formed within the large subunit homodimers. It depends on Mg(2+) as a cofactor. The disulfide bond which can form in the large chain dimeric partners within the hexadecamer appears to be associated with oxidative stress and protein turnover.

It is found in the plastid. The protein localises to the chloroplast. The catalysed reaction is 2 (2R)-3-phosphoglycerate + 2 H(+) = D-ribulose 1,5-bisphosphate + CO2 + H2O. It catalyses the reaction D-ribulose 1,5-bisphosphate + O2 = 2-phosphoglycolate + (2R)-3-phosphoglycerate + 2 H(+). Functionally, ruBisCO catalyzes two reactions: the carboxylation of D-ribulose 1,5-bisphosphate, the primary event in carbon dioxide fixation, as well as the oxidative fragmentation of the pentose substrate in the photorespiration process. Both reactions occur simultaneously and in competition at the same active site. This Marchantia polymorpha (Common liverwort) protein is Ribulose bisphosphate carboxylase large chain (rbcL).